A 273-amino-acid polypeptide reads, in one-letter code: MSASGENGTAKDYISHHLNNLQLDLRTFQLVEPHSGTPTFWTLNIDSLFFSVVLGALFLFIFKKVANTATSGVPGKLQTAVELIMGFVDSSVRDMYHGKSKVIAPLALTVFVWVFLMNMMDLLPIDLLPFIGEHVFGLPALRVVPTADVSITLSMALGVFILILFYSIKMKGVGGFVKELTMQPFNHPLFIPINLILEGVSLLSKPVSLGLRLFGNMYAGELIFILIAGLLPWWSQWLLNVPWAIFHILIITLQAFIFMVLTIVYLSMASEEH.

A run of 5 helical transmembrane segments spans residues 42–62 (TLNI…LFIF), 102–122 (VIAP…MMDL), 148–168 (DVSI…FYSI), 213–233 (LFGN…LLPW), and 244–264 (AIFH…LTIV).

It belongs to the ATPase A chain family. As to quaternary structure, F-type ATPases have 2 components, CF(1) - the catalytic core - and CF(0) - the membrane proton channel. CF(1) has five subunits: alpha(3), beta(3), gamma(1), delta(1), epsilon(1). CF(0) has three main subunits: a(1), b(2) and c(9-12). The alpha and beta chains form an alternating ring which encloses part of the gamma chain. CF(1) is attached to CF(0) by a central stalk formed by the gamma and epsilon chains, while a peripheral stalk is formed by the delta and b chains.

The protein resides in the cell inner membrane. In terms of biological role, key component of the proton channel; it plays a direct role in the translocation of protons across the membrane. The protein is ATP synthase subunit a of Serratia proteamaculans (strain 568).